The chain runs to 340 residues: Anthranilate phosphoribosyltransferase (340 aa).

5-phospho-alpha-D-ribose 1-diphosphate is bound by residues Gly-81, 84-85 (GD), Thr-89, 91-94 (NIST), 109-117 (KHGNRGATS), and Ser-121. Gly-81 contacts anthranilate. Ser-93 provides a ligand contact to Mg(2+). Position 112 (Asn-112) interacts with anthranilate. An anthranilate-binding site is contributed by Arg-167. Mg(2+) is bound by residues Asp-225 and Glu-226.

It belongs to the anthranilate phosphoribosyltransferase family. Homodimer. Mg(2+) is required as a cofactor.

The catalysed reaction is N-(5-phospho-beta-D-ribosyl)anthranilate + diphosphate = 5-phospho-alpha-D-ribose 1-diphosphate + anthranilate. It functions in the pathway amino-acid biosynthesis; L-tryptophan biosynthesis; L-tryptophan from chorismate: step 2/5. Catalyzes the transfer of the phosphoribosyl group of 5-phosphorylribose-1-pyrophosphate (PRPP) to anthranilate to yield N-(5'-phosphoribosyl)-anthranilate (PRA). In Methanocorpusculum labreanum (strain ATCC 43576 / DSM 4855 / Z), this protein is Anthranilate phosphoribosyltransferase.